A 136-amino-acid polypeptide reads, in one-letter code: Peptide deformylase (136 aa).

Cysteine 85 and histidine 126 together coordinate Fe cation. The active site involves glutamate 127. Histidine 130 serves as a coordination point for Fe cation.

Belongs to the polypeptide deformylase family. Requires Fe(2+) as cofactor.

The enzyme catalyses N-terminal N-formyl-L-methionyl-[peptide] + H2O = N-terminal L-methionyl-[peptide] + formate. Removes the formyl group from the N-terminal Met of newly synthesized proteins. Requires at least a dipeptide for an efficient rate of reaction. N-terminal L-methionine is a prerequisite for activity but the enzyme has broad specificity at other positions. The sequence is that of Peptide deformylase from Clostridium beijerinckii (strain ATCC 51743 / NCIMB 8052) (Clostridium acetobutylicum).